The sequence spans 143 residues: MLKMTVIDAKGLILGRLASSVAKQLLSGDEKVYIINAEQAIISGSRAATLREYRETRERGATEFGPYFPKRPDRILKRTIRGMLPYKRARGRDAMSRLKVYVGVPYELKGAETVTIPDADMRLLSSSRYVELGEVSQKMGSKF.

It belongs to the universal ribosomal protein uL13 family. In terms of assembly, part of the 50S ribosomal subunit.

Its function is as follows. This protein is one of the early assembly proteins of the 50S ribosomal subunit, although it is not seen to bind rRNA by itself. It is important during the early stages of 50S assembly. This chain is Large ribosomal subunit protein uL13, found in Methanosarcina acetivorans (strain ATCC 35395 / DSM 2834 / JCM 12185 / C2A).